A 313-amino-acid chain; its full sequence is tRNA dimethylallyltransferase (313 aa).

20–27 (GPTGTGKS) provides a ligand contact to ATP. A substrate-binding site is contributed by 22–27 (TGTGKS).

Belongs to the IPP transferase family. Monomer. Mg(2+) is required as a cofactor.

The enzyme catalyses adenosine(37) in tRNA + dimethylallyl diphosphate = N(6)-dimethylallyladenosine(37) in tRNA + diphosphate. Functionally, catalyzes the transfer of a dimethylallyl group onto the adenine at position 37 in tRNAs that read codons beginning with uridine, leading to the formation of N6-(dimethylallyl)adenosine (i(6)A). This is tRNA dimethylallyltransferase from Kocuria rhizophila (strain ATCC 9341 / DSM 348 / NBRC 103217 / DC2201).